A 536-amino-acid chain; its full sequence is Apoptosis inhibitor 5 homolog (536 aa).

The segment at 462 to 536 (ITFGEKAAAN…GYRNRRFNKY (75 aa)) is disordered. The segment covering 472–487 (GKDKDQEPEKKSRPSN) has biased composition (basic and acidic residues). A compositionally biased stretch (polar residues) spans 498–507 (KYSNKVNQSY). Residues 516 to 528 (RGGGGGGGSGGGY) show a composition bias toward gly residues.

The protein belongs to the API5 family.

It is found in the nucleus. Antiapoptotic factor. Also known to efficiently suppress E2F1-induced apoptosis. This Drosophila melanogaster (Fruit fly) protein is Apoptosis inhibitor 5 homolog.